Here is a 393-residue protein sequence, read N- to C-terminus: Anhydro-N-acetylmuramic acid kinase (393 aa).

An ATP-binding site is contributed by 9-16; that stretch reads GTSADGVD.

It belongs to the anhydro-N-acetylmuramic acid kinase family.

The catalysed reaction is 1,6-anhydro-N-acetyl-beta-muramate + ATP + H2O = N-acetyl-D-muramate 6-phosphate + ADP + H(+). The protein operates within amino-sugar metabolism; 1,6-anhydro-N-acetylmuramate degradation. Its pathway is cell wall biogenesis; peptidoglycan recycling. In terms of biological role, catalyzes the specific phosphorylation of 1,6-anhydro-N-acetylmuramic acid (anhMurNAc) with the simultaneous cleavage of the 1,6-anhydro ring, generating MurNAc-6-P. Is required for the utilization of anhMurNAc either imported from the medium or derived from its own cell wall murein, and thus plays a role in cell wall recycling. This Acidithiobacillus ferrooxidans (strain ATCC 23270 / DSM 14882 / CIP 104768 / NCIMB 8455) (Ferrobacillus ferrooxidans (strain ATCC 23270)) protein is Anhydro-N-acetylmuramic acid kinase.